A 682-amino-acid chain; its full sequence is Methionine--tRNA ligase (682 aa).

The short motif at 15 to 25 (PYANGAIHLGH) is the 'HIGH' region element. Zn(2+) contacts are provided by C146, C149, C159, and C162. The 'KMSKS' region motif lies at 331-335 (KMSKS). Position 334 (K334) interacts with ATP. The tRNA-binding domain occupies 580–682 (DFAKLDLRVA…QGVKPGMQVK (103 aa)).

Belongs to the class-I aminoacyl-tRNA synthetase family. MetG type 1 subfamily. In terms of assembly, homodimer. Requires Zn(2+) as cofactor.

The protein localises to the cytoplasm. The catalysed reaction is tRNA(Met) + L-methionine + ATP = L-methionyl-tRNA(Met) + AMP + diphosphate. In terms of biological role, is required not only for elongation of protein synthesis but also for the initiation of all mRNA translation through initiator tRNA(fMet) aminoacylation. In Pasteurella multocida (strain Pm70), this protein is Methionine--tRNA ligase.